The chain runs to 607 residues: Serine/threonine-protein kinase sid2 (607 aa).

Ser56, Ser60, Ser65, and Ser86 each carry phosphoserine. The span at 93–108 (DRSGELSYKDNNHWSD) shows a compositional bias: basic and acidic residues. The interval 93–118 (DRSGELSYKDNNHWSDRSSTGSPRWE) is disordered. The span at 109-118 (RSSTGSPRWE) shows a compositional bias: polar residues. The 301-residue stretch at 208–508 (FQTITQVGQG…LKQVMQHPYF (301 aa)) folds into the Protein kinase domain. ATP is bound by residues 214–222 (VGQGGYGSV) and Lys237. Phosphotyrosine is present on Tyr219. Asp331 functions as the Proton acceptor in the catalytic mechanism. At Ser402 the chain carries Phosphoserine. The AGC-kinase C-terminal domain maps to 509 to 589 (SKIDWKNVRT…RHQKNSHPTS (81 aa)). Residues 586–607 (HPTSSSSALSSPLSAPSFGTLL) form a disordered region. The span at 589–607 (SSSSALSSPLSAPSFGTLL) shows a compositional bias: low complexity.

It belongs to the protein kinase superfamily. Ser/Thr protein kinase family. As to quaternary structure, interacts with mob1 and cdc11.

Its subcellular location is the cytoplasm. The protein resides in the cytoskeleton. It localises to the microtubule organizing center. The protein localises to the spindle pole body. The enzyme catalyses L-seryl-[protein] + ATP = O-phospho-L-seryl-[protein] + ADP + H(+). The catalysed reaction is L-threonyl-[protein] + ATP = O-phospho-L-threonyl-[protein] + ADP + H(+). Part of a signaling pathway. Required for initiation of medial ring constriction and septation. This Schizosaccharomyces pombe (strain 972 / ATCC 24843) (Fission yeast) protein is Serine/threonine-protein kinase sid2 (sid2).